The primary structure comprises 929 residues: Patatin-like phospholipase domain-containing protein CNE02340 (929 aa).

Residues 37–85 (QPLDGDSSPLSPRSFSLPPESPQLSTASVKAPPPTWKYGPDNGTLRSGR) form a disordered region. Residues 43 to 54 (SSPLSPRSFSLP) are compositionally biased toward low complexity. A helical transmembrane segment spans residues 126–146 (WPLLFFIFFIIYLEFSAYVIT). The PNPLA domain occupies 301-493 (LCLSGGASFG…REDIPLGSLH (193 aa)). The short motif at 332–336 (GTSAG) is the GXSXG element. Residue S334 is the Nucleophile of the active site. Residue D480 is the Proton acceptor of the active site. 3 disordered regions span residues 644-765 (ALSH…NFGD), 778-806 (LSSP…QRFR), and 818-929 (VSES…QDGA). Composition is skewed to polar residues over residues 652-664 (NDPA…TNPE) and 745-764 (PTHS…SNFG). The span at 779 to 806 (SSPFRSIRSNTSSSSNNVQSPSSSQRFR) shows a compositional bias: low complexity. Residues 856–878 (VESHSDRSEDEMLHSGANVKEEY) are compositionally biased toward basic and acidic residues.

It belongs to the PLPL family.

It is found in the membrane. Probable lipid hydrolase. The sequence is that of Patatin-like phospholipase domain-containing protein CNE02340 from Cryptococcus neoformans var. neoformans serotype D (strain JEC21 / ATCC MYA-565) (Filobasidiella neoformans).